A 274-amino-acid chain; its full sequence is Acyl-[acyl-carrier-protein]--UDP-N-acetylglucosamine O-acyltransferase (274 aa).

This sequence belongs to the transferase hexapeptide repeat family. LpxA subfamily. Homotrimer.

Its subcellular location is the cytoplasm. It catalyses the reaction a (3R)-hydroxyacyl-[ACP] + UDP-N-acetyl-alpha-D-glucosamine = a UDP-3-O-[(3R)-3-hydroxyacyl]-N-acetyl-alpha-D-glucosamine + holo-[ACP]. The protein operates within glycolipid biosynthesis; lipid IV(A) biosynthesis; lipid IV(A) from (3R)-3-hydroxytetradecanoyl-[acyl-carrier-protein] and UDP-N-acetyl-alpha-D-glucosamine: step 1/6. Involved in the biosynthesis of lipid A, a phosphorylated glycolipid that anchors the lipopolysaccharide to the outer membrane of the cell. This Bartonella quintana (strain Toulouse) (Rochalimaea quintana) protein is Acyl-[acyl-carrier-protein]--UDP-N-acetylglucosamine O-acyltransferase.